The sequence spans 186 residues: Inner membrane-spanning protein YciB (186 aa).

Transmembrane regions (helical) follow at residues 10-30 (IILF…AVAI), 47-67 (VEPL…ATLL), 76-96 (WKPT…QLVF), 121-141 (WGWT…AYNF), and 149-169 (FKLF…ALYL).

It belongs to the YciB family.

The protein localises to the cell inner membrane. Plays a role in cell envelope biogenesis, maintenance of cell envelope integrity and membrane homeostasis. This is Inner membrane-spanning protein YciB from Acidovorax sp. (strain JS42).